We begin with the raw amino-acid sequence, 460 residues long: Chromosomal replication initiator protein DnaA (460 aa).

The interval 1 to 83 (MENIWLEAQT…EFHVADEKPE (83 aa)) is domain I, interacts with DnaA modulators. The segment covering 78–121 (ADEKPEAAPEEKPEKEGKPAREKEKDKDKEKEKDREKEKDKKEL) has biased composition (basic and acidic residues). The segment at 78 to 122 (ADEKPEAAPEEKPEKEGKPAREKEKDKDKEKEKDREKEKDKKELV) is disordered. Residues 83–123 (EAAPEEKPEKEGKPAREKEKDKDKEKEKDREKEKDKKELVP) are domain II. The domain III, AAA+ region stretch occupies residues 124 to 340 (NLNPKYTFES…GMLIRLEAFA (217 aa)). ATP is bound by residues Gly168, Gly170, Lys171, and Thr172. A domain IV, binds dsDNA region spans residues 341-460 (SLTGQEITLS…VEDIRKKLFT (120 aa)).

Belongs to the DnaA family. As to quaternary structure, oligomerizes as a right-handed, spiral filament on DNA at oriC.

The protein localises to the cytoplasm. Its function is as follows. Plays an essential role in the initiation and regulation of chromosomal replication. ATP-DnaA binds to the origin of replication (oriC) to initiate formation of the DNA replication initiation complex once per cell cycle. Binds the DnaA box (a 9 base pair repeat at the origin) and separates the double-stranded (ds)DNA. Forms a right-handed helical filament on oriC DNA; dsDNA binds to the exterior of the filament while single-stranded (ss)DNA is stabiized in the filament's interior. The ATP-DnaA-oriC complex binds and stabilizes one strand of the AT-rich DNA unwinding element (DUE), permitting loading of DNA polymerase. After initiation quickly degrades to an ADP-DnaA complex that is not apt for DNA replication. Binds acidic phospholipids. The protein is Chromosomal replication initiator protein DnaA of Geobacter sp. (strain M21).